Consider the following 336-residue polypeptide: Ribosomal RNA large subunit methyltransferase F (336 aa).

The protein belongs to the methyltransferase superfamily. METTL16/RlmF family.

Its subcellular location is the cytoplasm. The enzyme catalyses adenosine(1618) in 23S rRNA + S-adenosyl-L-methionine = N(6)-methyladenosine(1618) in 23S rRNA + S-adenosyl-L-homocysteine + H(+). Specifically methylates the adenine in position 1618 of 23S rRNA. In Yersinia pestis bv. Antiqua (strain Nepal516), this protein is Ribosomal RNA large subunit methyltransferase F.